The chain runs to 246 residues: 1-(5-phosphoribosyl)-5-[(5-phosphoribosylamino)methylideneamino] imidazole-4-carboxamide isomerase (246 aa).

D10 (proton acceptor) is an active-site residue.

Belongs to the HisA/HisF family.

The protein resides in the cytoplasm. It carries out the reaction 1-(5-phospho-beta-D-ribosyl)-5-[(5-phospho-beta-D-ribosylamino)methylideneamino]imidazole-4-carboxamide = 5-[(5-phospho-1-deoxy-D-ribulos-1-ylimino)methylamino]-1-(5-phospho-beta-D-ribosyl)imidazole-4-carboxamide. It participates in amino-acid biosynthesis; L-histidine biosynthesis; L-histidine from 5-phospho-alpha-D-ribose 1-diphosphate: step 4/9. The sequence is that of 1-(5-phosphoribosyl)-5-[(5-phosphoribosylamino)methylideneamino] imidazole-4-carboxamide isomerase from Corynebacterium efficiens (strain DSM 44549 / YS-314 / AJ 12310 / JCM 11189 / NBRC 100395).